The following is a 121-amino-acid chain: MINYSPKRSDEPIWWGLFGAGGVWFAMITPVTVLLMGILLPLHGFGVVDIGYDKVYAFVSHPIGGAFTVLSLSLPMWHAMHRVHHGLHDLQIHLGTVGKYACYLAAALVTVLATVWVIQLS.

3 helical membrane-spanning segments follow: residues 22 to 42 (GVWF…LLPL), 57 to 77 (AFVS…LPMW), and 100 to 120 (YACY…VIQL).

Belongs to the FrdD family. In terms of assembly, part of an enzyme complex containing four subunits: a flavoprotein (FrdA), an iron-sulfur protein (FrdB), and two hydrophobic anchor proteins (FrdC and FrdD).

The protein localises to the cell inner membrane. Anchors the catalytic components of the fumarate reductase complex to the cell membrane, binds quinones. The polypeptide is Fumarate reductase subunit D (Shewanella putrefaciens (strain CN-32 / ATCC BAA-453)).